Here is a 263-residue protein sequence, read N- to C-terminus: Isoprenyl transferase (263 aa).

Asp-38 is a catalytic residue. Asp-38 is a Mg(2+) binding site. Substrate contacts are provided by residues 39-42 (GNRR), His-55, and 83-85 (STD). Asn-86 (proton acceptor) is an active-site residue. Substrate-binding positions include Phe-87, Arg-89, Arg-212, and 218-220 (RLS). Glu-231 is a binding site for Mg(2+).

This sequence belongs to the UPP synthase family. In terms of assembly, homodimer. Requires Mg(2+) as cofactor.

In terms of biological role, catalyzes the condensation of isopentenyl diphosphate (IPP) with allylic pyrophosphates generating different type of terpenoids. The chain is Isoprenyl transferase from Thermus thermophilus (strain ATCC BAA-163 / DSM 7039 / HB27).